We begin with the raw amino-acid sequence, 661 residues long: Ubiquitin-associated and SH3 domain-containing protein A (661 aa).

The UBA domain occupies 15–60 (KLKSRSSPSLLEPLLAMGFPVHTALKALAATGRKTAEEALAWLHDH). Residues 276-341 (VHYQTLRALF…PENYTDRASE (66 aa)) enclose the SH3 domain. The segment at 395–661 (RKSVLVVRHG…FNWRNWISGN (267 aa)) is phosphatase-like.

Homodimer or homooligomer. Interacts with CBL. Part of a complex containing CBL and activated EGFR. Interacts with ubiquitin and with mono-ubiquitinated proteins. Interacts with dynamin. Highest expression of UBASH3A in tissues belonging to the immune system, including spleen, peripheral blood leukocytes, thymus and bone marrow.

Its subcellular location is the cytoplasm. The protein resides in the nucleus. In terms of biological role, interferes with CBL-mediated down-regulation and degradation of receptor-type tyrosine kinases. Promotes accumulation of activated target receptors, such as T-cell receptors, EGFR and PDGFRB, on the cell surface. Exhibits negligible protein tyrosine phosphatase activity at neutral pH. May act as a dominant-negative regulator of UBASH3B-dependent dephosphorylation. May inhibit dynamin-dependent endocytic pathways by functionally sequestering dynamin via its SH3 domain. In Homo sapiens (Human), this protein is Ubiquitin-associated and SH3 domain-containing protein A (UBASH3A).